Consider the following 143-residue polypeptide: MFLGTYTPKLDDKGRLTLPAKFRDALAGGLMVTKSQDHSLAVYPRAAFEQLARRASKAPRSNPEARAFLRNLAAGTDEQHPDSQGRITLSADHRRYASLSKDCVVIGAVDYLEIWDAQAWQNYQQIHEENFSAASDEALGDIF.

2 SpoVT-AbrB domains span residues 5–47 and 76–119; these read TYTP…PRAA and TDEQ…DAQA.

Belongs to the MraZ family. As to quaternary structure, forms oligomers.

The protein resides in the cytoplasm. The protein localises to the nucleoid. This Mycobacterium bovis (strain ATCC BAA-935 / AF2122/97) protein is Transcriptional regulator MraZ.